Reading from the N-terminus, the 147-residue chain is Microtubule-associated protein 1 light chain 3 gamma (147 aa).

A phosphoserine; by TBK1 mark is found at S93 and S96. A lipid anchor (Phosphatidylethanolamine amidated glycine; alternate) is attached at G126. G126 is lipidated: Phosphatidylserine amidated glycine; alternate. The propeptide at 127–147 (CLESAAPRDGSSLEDRPCNPL) is removed in mature form.

It belongs to the ATG8 family. In terms of assembly, 3 different light chains, LC1 (a cleavage product of MAP1B), LC2 (a cleavage product of MAP1A) and LC3 (produced by one of the MAP1LC3 genes), can associate with the MAP1A or MAP1B heavy chains. Interacts with TP53INP1 and TP53INP2. Interacts with CALCOCO2. Interacts with TECPR2. Interacts with TBC1D5. Found in a complex with UBQLN1 and UBQLN2. Interacts with UBQLN4 (via STI1 1 and 2 domains). Interacts with UBQLN1 in the presence of UBQLN4. Interacts with TRIM5. Interacts with ATG13. Interacts with MEFV and TRIM21. Interacts with WDR81; recruits MAP1LC3C to ubiquitinated protein aggregates in the aggrephagy process. Interacts with MOAP1 (via LIR motif). Interacts with reticulophagy regulators RETREG1, RETREG2 and RETREG3. Interacts with TAX1BP1. Interacts with IRGM. Interacts with SPART. In terms of processing, the precursor molecule is cleaved by ATG4 (ATG4A, ATG4B, ATG4C or ATG4D) to expose the glycine at the C-terminus and form the cytosolic form, LC3-I. The processed form is then activated by APG7L/ATG7, transferred to ATG3 and conjugated to phosphatidylethanolamine (PE) phospholipid to form the membrane-bound form, LC3-II. During non-canonical autophagy, the processed form is conjugated to phosphatidylserine (PS) phospholipid. ATG4 proteins also mediate the delipidation of PE-conjugated forms. In addition, ATG4B and ATG4D mediate delipidation of ATG8 proteins conjugated to PS during non-canonical autophagy. (Microbial infection) The Legionella effector RavZ is a deconjugating enzyme that hydrolyzes the amide bond between the C-terminal glycine residue and an adjacent aromatic residue in ATG8 proteins conjugated to phosphatidylethanolamine (PE), producing an ATG8 protein that is resistant to reconjugation by the host machinery due to the cleavage of the reactive C-terminal glycine. RavZ is also able to mediate delipidation of ATG8 proteins conjugated to phosphatidylserine (PS). Post-translationally, phosphorylation at Ser-96 and Ser-98 by TBK1 prevents interaction with ATG4 (ATG4A, ATG4B, ATG4C or ATG4D). Phosphorylation by TBK1 on autophagosomes prevents their delipidation by ATG4 and premature removal from nascent autophagosomes. As to expression, most abundant in placenta, lung and ovary.

It localises to the cytoplasmic vesicle. The protein resides in the autophagosome membrane. It is found in the endomembrane system. The protein localises to the cytoplasm. Its subcellular location is the cytoskeleton. In terms of biological role, ubiquitin-like modifier that plays a crucial role in antibacterial autophagy (xenophagy) through the selective binding of CALCOCO2. Recruits all ATG8 family members to infecting bacteria such as S.typhimurium. May also play a role in aggrephagy, the macroautophagic degradation of ubiquitinated and aggregated proteins. This chain is Microtubule-associated protein 1 light chain 3 gamma (MAP1LC3C), found in Homo sapiens (Human).